Reading from the N-terminus, the 193-residue chain is Deoxycytidylate deaminase (193 aa).

The CMP/dCMP-type deaminase domain occupies 1–171 (MKASTVLQIA…DILRNAGIEV (171 aa)). The Zn(2+) site is built by Cys19, Cys49, His94, Glu102, and His104. Catalysis depends on Glu106, which acts as the Proton donor. Positions 132 and 135 each coordinate Zn(2+). Tyr153 contributes to the substrate binding site.

The protein belongs to the cytidine and deoxycytidylate deaminase family. Homohexamer. Requires Zn(2+) as cofactor.

The enzyme catalyses dCMP + H2O + H(+) = dUMP + NH4(+). With respect to regulation, allosteric enzyme whose activity is greatly influenced by the end products of its metabolic pathway, dCTP and dTTP. Its function is as follows. Supplies the nucleotide substrate for thymidylate synthetase. This chain is Deoxycytidylate deaminase (CD), found in Escherichia coli (Bacteriophage T4).